The sequence spans 1161 residues: DNA-directed RNA polymerase III subunit 2 (1161 aa).

The C4-type zinc-finger motif lies at 1104 to 1125; the sequence is CRACGLLGYYNYKLKKAVCTTC.

This sequence belongs to the RNA polymerase beta chain family. Component of the RNA polymerase III (Pol III) complex consisting of 17 subunits.

It is found in the nucleus. The enzyme catalyses RNA(n) + a ribonucleoside 5'-triphosphate = RNA(n+1) + diphosphate. Its function is as follows. DNA-dependent RNA polymerase catalyzes the transcription of DNA into RNA using the four ribonucleoside triphosphates as substrates. Second largest core component of RNA polymerase III which synthesizes small RNAs, such as 5S rRNA and tRNAs. Proposed to contribute to the polymerase catalytic activity and forms the polymerase active center together with the largest subunit. Pol III is composed of mobile elements and NRPC2 is part of the core element with the central large cleft and probably a clamp element that moves to open and close the cleft. Functionally, essential for the completion of the three rounds of mitosis in female megaspores required for the development of mature gametophytes. The sequence is that of DNA-directed RNA polymerase III subunit 2 from Arabidopsis thaliana (Mouse-ear cress).